A 442-amino-acid polypeptide reads, in one-letter code: Dihydrolipoyllysine-residue acetyltransferase component of pyruvate dehydrogenase complex (442 aa).

Residues 2-77 (AFEFKLPDIG…TVGQTIITFD (76 aa)) enclose the Lipoyl-binding domain. At Lys43 the chain carries N6-lipoyllysine. Basic and acidic residues predominate over residues 84–97 (LQFKGSDESDDAKT). The segment at 84 to 136 (LQFKGSDESDDAKTEAQVQSTAEAGQDVAKEEQAQEPAKATGAGQQDQAEVDP) is disordered. The Peripheral subunit-binding (PSBD) domain occupies 141–178 (IAMPSVRKYAREKGVDIRKVTGSGNNGRVVKEDIDSFV). Residues 182-208 (AQEAAPQETAAPQETAAKPAAAPAPEG) are compositionally biased toward low complexity. Positions 182-215 (AQEAAPQETAAPQETAAKPAAAPAPEGEFPETRE) are disordered. Residue His413 is part of the active site.

It belongs to the 2-oxoacid dehydrogenase family. As to quaternary structure, forms a 24-polypeptide structural core with octahedral symmetry. (R)-lipoate serves as cofactor.

It catalyses the reaction N(6)-[(R)-dihydrolipoyl]-L-lysyl-[protein] + acetyl-CoA = N(6)-[(R)-S(8)-acetyldihydrolipoyl]-L-lysyl-[protein] + CoA. Its function is as follows. The pyruvate dehydrogenase complex catalyzes the overall conversion of pyruvate to acetyl-CoA and CO(2). It contains multiple copies of three enzymatic components: pyruvate dehydrogenase (E1), dihydrolipoamide acetyltransferase (E2) and lipoamide dehydrogenase (E3). In terms of biological role, the B.subtilis PDH complex also possesses branched-chain 2-oxoacid dehydrogenase (BCDH) activity. This Bacillus subtilis (strain 168) protein is Dihydrolipoyllysine-residue acetyltransferase component of pyruvate dehydrogenase complex (pdhC).